We begin with the raw amino-acid sequence, 92 residues long: Small ribosomal subunit protein uS19c (92 aa).

It belongs to the universal ribosomal protein uS19 family.

It localises to the plastid. The protein localises to the chloroplast. In terms of biological role, protein S19 forms a complex with S13 that binds strongly to the 16S ribosomal RNA. The chain is Small ribosomal subunit protein uS19c from Eucalyptus globulus subsp. globulus (Tasmanian blue gum).